A 234-amino-acid polypeptide reads, in one-letter code: Nuclear ubiquitous casein and cyclin-dependent kinase substrate 1 (234 aa).

Positions 1–234 (MSRPVRNRKV…SEDEASSGED (234 aa)) are disordered. Position 13 is a phosphotyrosine (tyrosine 13). Residues serine 14 and serine 19 each carry the phosphoserine modification. Tyrosine 26 bears the Phosphotyrosine mark. Over residues 35–51 (KKIRSSPREAKNKRRSG) the composition is skewed to basic residues. Phosphoserine occurs at positions 54, 58, 61, 73, 75, and 79. Over residues 64 to 77 (KDVKTKKDDSHSAE) the composition is skewed to basic and acidic residues. A compositionally biased stretch (low complexity) spans 91 to 100 (QQRQAASKAA). The span at 111–124 (VGSEEEPEEDDEAP) shows a compositional bias: acidic residues. Phosphoserine occurs at positions 113, 130, 132, and 144. The span at 132–145 (SDEDFLMEDDDDSD) shows a compositional bias: acidic residues. Over residues 149 to 174 (SKKKNKKMVKKSKPERKEKKMPKPRL) the composition is skewed to basic residues. The residue at position 179 (threonine 179) is a Phosphothreonine. Residue serine 181 is modified to Phosphoserine. Positions 185–199 (GKAKVGRPTASKKSK) are enriched in basic residues. Threonine 202 is modified (phosphothreonine). Residues serine 204, serine 214, serine 225, and serine 231 each carry the phosphoserine modification. Over residues 223 to 234 (EGSEDEASSGED) the composition is skewed to acidic residues.

Does not interact with RAD51. Phosphorylated in an ATM-dependent manner in response to DNA damage. Phosphorylated by CDK1 and casein kinase.

It is found in the nucleus. The protein resides in the chromosome. In terms of biological role, chromatin-associated protein involved in DNA repair by promoting homologous recombination (HR). Binds double-stranded DNA (dsDNA) and secondary DNA structures, such as D-loop structures, but with less affinity than RAD51AP1. The protein is Nuclear ubiquitous casein and cyclin-dependent kinase substrate 1 (Nucks1) of Mus musculus (Mouse).